The following is a 427-amino-acid chain: 3-phosphoshikimate 1-carboxyvinyltransferase (427 aa).

3-phosphoshikimate is bound by residues Lys-22, Ser-23, and Arg-27. Lys-22 contributes to the phosphoenolpyruvate binding site. Residues Gly-96 and Arg-124 each contribute to the phosphoenolpyruvate site. Ser-169, Ser-170, Gln-171, Ser-197, Asp-313, Asn-336, and Lys-340 together coordinate 3-phosphoshikimate. Gln-171 provides a ligand contact to phosphoenolpyruvate. Asp-313 acts as the Proton acceptor in catalysis. Phosphoenolpyruvate contacts are provided by Arg-344, Arg-386, and Lys-411.

Belongs to the EPSP synthase family. In terms of assembly, monomer.

Its subcellular location is the cytoplasm. The enzyme catalyses 3-phosphoshikimate + phosphoenolpyruvate = 5-O-(1-carboxyvinyl)-3-phosphoshikimate + phosphate. It functions in the pathway metabolic intermediate biosynthesis; chorismate biosynthesis; chorismate from D-erythrose 4-phosphate and phosphoenolpyruvate: step 6/7. In terms of biological role, catalyzes the transfer of the enolpyruvyl moiety of phosphoenolpyruvate (PEP) to the 5-hydroxyl of shikimate-3-phosphate (S3P) to produce enolpyruvyl shikimate-3-phosphate and inorganic phosphate. The sequence is that of 3-phosphoshikimate 1-carboxyvinyltransferase from Shigella sonnei.